The sequence spans 472 residues: Protein translocase subunit SecD (472 aa).

6 consecutive transmembrane segments (helical) span residues 8–28 (ILFTVIVFVFALLGLILPLSG), 300–320 (TIINAGIIGLIIVMIYMIIFY), 325–347 (VIADIALIYNTFLLMGILSWTGA), 353–375 (GIAGIILTFGTTVDGNIIIYERI), 396–416 (VFSTIFDANITTILAGLVLFF), and 424–444 (GFAVTLIIGVLGAMFTNLVVS).

It belongs to the SecD/SecF family. SecD subfamily. As to quaternary structure, forms a complex with SecF. Part of the essential Sec protein translocation apparatus which comprises SecA, SecYEG and auxiliary proteins SecDF. Other proteins may also be involved.

It localises to the cell inner membrane. In terms of biological role, part of the Sec protein translocase complex. Interacts with the SecYEG preprotein conducting channel. SecDF uses the proton motive force (PMF) to complete protein translocation after the ATP-dependent function of SecA. This is Protein translocase subunit SecD from Petrotoga mobilis (strain DSM 10674 / SJ95).